Here is a 1473-residue protein sequence, read N- to C-terminus: Collagen alpha-1(XVII) chain (1473 aa).

The segment covering 1 to 19 (MDITQKNKRDGTEVTERII) has biased composition (basic and acidic residues). 2 disordered regions span residues 1-155 (MDIT…PSTR) and 168-188 (GSRS…PIPK). Over 1 to 474 (MDITQKNKRD…CGSWCSWWKW (474 aa)) the chain is Cytoplasmic. A nonhelical region (NC16) region spans residues 1–572 (MDITQKNKRD…MTEQENGNLR (572 aa)). Polar residues-rich tracts occupy residues 57–96 (LTHG…SPGS), 111–120 (EGSSSGNSSP), and 170–184 (RSAS…SNTL). The tract at residues 146–231 (RLQSASPSTR…WSSTLPAGSS (86 aa)) is necessary for interaction with DST and for the recruitment of DST to hemidesmosome. The helical; Signal-anchor for type II membrane protein transmembrane segment at 475–495 (LLGLLLTWLLLLGLLFGLIAL) threads the bilayer. Residues 496 to 1473 (AEEVRKLKAR…RRRRSIAVKP (978 aa)) are Extracellular-facing. Disordered regions lie at residues 567 to 1017 (ENGN…LSSS), 1173 to 1234 (FRGI…ISGA), and 1261 to 1308 (SFIV…SSMG). Residues 573-1459 (GSPGPKGDMG…KGEKGDKGDQ (887 aa)) are triple-helical region. 4 stretches are compositionally biased toward low complexity: residues 619–638 (EPGM…MGPR), 667–678 (PGSVGPKGSIGP), 729–742 (EPGA…AGPD), and 769–790 (PGKP…PGRP). The span at 814–835 (PGPPGPPGAMGPPGPPGAPGPV) shows a compositional bias: pro residues. Composition is skewed to low complexity over residues 837 to 847 (PAGLPGQQGPR) and 854 to 866 (GESF…SFSE). 2 stretches are compositionally biased toward pro residues: residues 878-899 (PPGP…PGPP) and 913-922 (PPGPPGPPGP). The span at 940–957 (FPGLSGSGSSSLGLNLQG) shows a compositional bias: low complexity. 2 stretches are compositionally biased toward pro residues: residues 1001 to 1011 (PPGPPGPPGPP) and 1179 to 1188 (PPGPPGPPGL). Over residues 1198–1210 (TEDLSSYLQTAGL) the composition is skewed to polar residues. 2 stretches are compositionally biased toward pro residues: residues 1214–1228 (PGPP…PRGP) and 1266–1275 (PPGPPGPQGP). Over residues 1283–1307 (STDSSYSRSGSSSSFSRDTSYSSSM) the composition is skewed to low complexity. N-linked (GlcNAc...) asparagine glycosylation occurs at Asn-1404. Residues 1417-1473 (GAIPGPPGQKGEMGIPGPKGERGPAGPPGPRGHKGEKGDKGDQFYIGRRRRSIAVKP) form a disordered region. Residues 1449-1458 (HKGEKGDKGD) show a composition bias toward basic and acidic residues. Residues 1460-1473 (FYIGRRRRSIAVKP) form a nonhelical region (NC1) region. Positions 1463–1473 (GRRRRSIAVKP) are enriched in basic residues.

Homotrimers of alpha 1(XVII)chains. Interacts (via cytoplasmic region) with ITGB4 (via cytoplasmic region). Interacts (via cytoplasmic region) with DST (via N-terminus). Interacts (via N-terminus) with PLEC. Interacts (via cytoplasmic region) with DSP. The intracellular/endo domain is disulfide-linked. In terms of processing, prolines at the third position of the tripeptide repeating unit (G-X-Y) are hydroxylated in some or all of the chains. Post-translationally, the ectodomain is shedded from the surface of keratinocytes resulting in a 120-kDa soluble form, also named as 120 kDa linear IgA disease antigen homolog. The shedding is mediated by membrane-bound metalloproteases.

It localises to the cell junction. The protein resides in the hemidesmosome. The protein localises to the membrane. It is found in the secreted. Its subcellular location is the extracellular space. It localises to the extracellular matrix. The protein resides in the basement membrane. May play a role in the integrity of hemidesmosome and the attachment of basal keratinocytes to the underlying basement membrane. In terms of biological role, the 120 kDa linear IgA disease antigen homolog is an anchoring filament component involved in dermal-epidermal cohesion. The chain is Collagen alpha-1(XVII) chain (COL17A1) from Bos taurus (Bovine).